We begin with the raw amino-acid sequence, 268 residues long: Glucosamine-6-phosphate deaminase (268 aa).

Aspartate 67 functions as the Proton acceptor; for enolization step in the catalytic mechanism. Residue asparagine 137 is the For ring-opening step of the active site. The active-site Proton acceptor; for ring-opening step is the histidine 139. Glutamate 144 (for ring-opening step) is an active-site residue.

This sequence belongs to the glucosamine/galactosamine-6-phosphate isomerase family. NagB subfamily. Homohexamer.

It carries out the reaction alpha-D-glucosamine 6-phosphate + H2O = beta-D-fructose 6-phosphate + NH4(+). The protein operates within amino-sugar metabolism; N-acetylneuraminate degradation; D-fructose 6-phosphate from N-acetylneuraminate: step 5/5. Functionally, catalyzes the reversible isomerization-deamination of glucosamine 6-phosphate (GlcN6P) to form fructose 6-phosphate (Fru6P) and ammonium ion. This Pseudoalteromonas translucida (strain TAC 125) protein is Glucosamine-6-phosphate deaminase.